A 415-amino-acid chain; its full sequence is Squalene synthase 3 (415 aa).

The next 2 membrane-spanning stretches (helical) occupy residues 281-301 (AIFRFCAIPQIMAIGTLALCY) and 392-412 (LIIILFIILAILYAYLSSNLP).

This sequence belongs to the phytoene/squalene synthase family. The cofactor is Mg(2+). Mn(2+) is required as a cofactor.

It is found in the endoplasmic reticulum membrane. The enzyme catalyses 2 (2E,6E)-farnesyl diphosphate + NADH + H(+) = squalene + 2 diphosphate + NAD(+). The catalysed reaction is 2 (2E,6E)-farnesyl diphosphate + NADPH + H(+) = squalene + 2 diphosphate + NADP(+). It participates in terpene metabolism; lanosterol biosynthesis; lanosterol from farnesyl diphosphate: step 1/3. Component of the triterpene saponins (e.g. ginsenosides or panaxosides) and phytosterols biosynthetic pathways. Catalyzes the biosynthesis of squalene. The protein is Squalene synthase 3 of Panax ginseng (Korean ginseng).